Reading from the N-terminus, the 417-residue chain is Serine hydroxymethyltransferase (417 aa).

(6S)-5,6,7,8-tetrahydrofolate is bound by residues leucine 112 and 116–118 (GHL). Lysine 221 is subject to N6-(pyridoxal phosphate)lysine. Glutamate 247 contacts (6S)-5,6,7,8-tetrahydrofolate.

This sequence belongs to the SHMT family. In terms of assembly, homodimer. Pyridoxal 5'-phosphate is required as a cofactor.

The protein localises to the cytoplasm. The catalysed reaction is (6R)-5,10-methylene-5,6,7,8-tetrahydrofolate + glycine + H2O = (6S)-5,6,7,8-tetrahydrofolate + L-serine. It participates in one-carbon metabolism; tetrahydrofolate interconversion. Its pathway is amino-acid biosynthesis; glycine biosynthesis; glycine from L-serine: step 1/1. Catalyzes the reversible interconversion of serine and glycine with tetrahydrofolate (THF) serving as the one-carbon carrier. This reaction serves as the major source of one-carbon groups required for the biosynthesis of purines, thymidylate, methionine, and other important biomolecules. Also exhibits THF-independent aldolase activity toward beta-hydroxyamino acids, producing glycine and aldehydes, via a retro-aldol mechanism. The chain is Serine hydroxymethyltransferase from Borrelia recurrentis (strain A1).